A 365-amino-acid polypeptide reads, in one-letter code: DNA polymerase IV (365 aa).

One can recognise a UmuC domain in the interval 14–198 (IIHIDMDAFF…LPIEKFHGVG (185 aa)). Mg(2+) contacts are provided by D18 and D116. E117 is a catalytic residue.

Belongs to the DNA polymerase type-Y family. In terms of assembly, monomer. Requires Mg(2+) as cofactor.

It localises to the cytoplasm. The catalysed reaction is DNA(n) + a 2'-deoxyribonucleoside 5'-triphosphate = DNA(n+1) + diphosphate. Poorly processive, error-prone DNA polymerase involved in untargeted mutagenesis. Copies undamaged DNA at stalled replication forks, which arise in vivo from mismatched or misaligned primer ends. These misaligned primers can be extended by PolIV. Exhibits no 3'-5' exonuclease (proofreading) activity. May be involved in translesional synthesis, in conjunction with the beta clamp from PolIII. This chain is DNA polymerase IV, found in Streptococcus pyogenes serotype M3 (strain ATCC BAA-595 / MGAS315).